The sequence spans 424 residues: Tyrosine--tRNA ligase (424 aa).

Tyr-37 contributes to the L-tyrosine binding site. Positions 42–51 (PTADSLHLGH) match the 'HIGH' region motif. L-tyrosine contacts are provided by Tyr-175 and Gln-179. Positions 235 to 239 (KFGKT) match the 'KMSKS' region motif. Lys-238 contributes to the ATP binding site. In terms of domain architecture, S4 RNA-binding spans 357-414 (ADLMQALVDAELQPSRGQARKTIASNAVTINGEKQSDPEYIFNDEDRLFGRYTLLRRG).

The protein belongs to the class-I aminoacyl-tRNA synthetase family. TyrS type 1 subfamily. As to quaternary structure, homodimer.

It localises to the cytoplasm. The enzyme catalyses tRNA(Tyr) + L-tyrosine + ATP = L-tyrosyl-tRNA(Tyr) + AMP + diphosphate + H(+). Catalyzes the attachment of tyrosine to tRNA(Tyr) in a two-step reaction: tyrosine is first activated by ATP to form Tyr-AMP and then transferred to the acceptor end of tRNA(Tyr). This chain is Tyrosine--tRNA ligase, found in Salmonella enteritidis PT4 (strain P125109).